Consider the following 254-residue polypeptide: 4-hydroxy-tetrahydrodipicolinate reductase (254 aa).

NAD(+)-binding positions include 10–15 (GATGKV) and 101–103 (GTT). His-157 acts as the Proton donor/acceptor in catalysis. His-158 contributes to the (S)-2,3,4,5-tetrahydrodipicolinate binding site. The active-site Proton donor is Lys-161. 167–168 (GT) is a binding site for (S)-2,3,4,5-tetrahydrodipicolinate.

It belongs to the DapB family.

The protein localises to the cytoplasm. It carries out the reaction (S)-2,3,4,5-tetrahydrodipicolinate + NAD(+) + H2O = (2S,4S)-4-hydroxy-2,3,4,5-tetrahydrodipicolinate + NADH + H(+). It catalyses the reaction (S)-2,3,4,5-tetrahydrodipicolinate + NADP(+) + H2O = (2S,4S)-4-hydroxy-2,3,4,5-tetrahydrodipicolinate + NADPH + H(+). Its pathway is amino-acid biosynthesis; L-lysine biosynthesis via DAP pathway; (S)-tetrahydrodipicolinate from L-aspartate: step 4/4. In terms of biological role, catalyzes the conversion of 4-hydroxy-tetrahydrodipicolinate (HTPA) to tetrahydrodipicolinate. The sequence is that of 4-hydroxy-tetrahydrodipicolinate reductase from Symbiobacterium thermophilum (strain DSM 24528 / JCM 14929 / IAM 14863 / T).